We begin with the raw amino-acid sequence, 2339 residues long: Voltage-dependent N-type calcium channel subunit alpha-1B (2339 aa).

The segment at 1–37 (MVRFGDELGGRYGGPGGGERARGGGAGGAGGPGPGGL) is disordered. At 1-90 (MVRFGDELGG…DNVVRKYAKR (90 aa)) the chain is on the cytoplasmic side. Gly residues predominate over residues 10 to 37 (GRYGGPGGGERARGGGAGGAGGPGPGGL). R22 is subject to Omega-N-methylarginine. The I repeat unit spans residues 82–359 (NVVRKYAKRI…LVLGVLSGEF (278 aa)). A helical transmembrane segment spans residues 91–114 (ITEWPPFEYMILATIIANCIVLAL). Over 115 to 131 (EQHLPDGDKTPMSERLD) the chain is Extracellular. A helical transmembrane segment spans residues 132 to 152 (DTEPYFIGIFCFEAGIKIIAL). At 153–163 (GFVFHKGSYLR) the chain is on the cytoplasmic side. Residues 164–182 (NGWNVMDFVVVLTGILATA) traverse the membrane as a helical segment. Over 183–187 (GTDFD) the chain is Extracellular. A helical transmembrane segment spans residues 188–211 (LRTLRAVRVLRPLKLVSGIPSLQV). The Cytoplasmic portion of the chain corresponds to 212 to 221 (VLKSIMKAMV). Residues 222 to 244 (PLLQIGLLLFFAILMFAIIGLEF) form a helical membrane-spanning segment. Residues 245–331 (YMGKFHKACF…NTNDAAGNTW (87 aa)) lie on the Extracellular side of the membrane. N-linked (GlcNAc...) asparagine glycosylation is present at N256. The helical transmembrane segment at 332–356 (NWLYFIPLIIIGSFFMLNLVLGVLS) threads the bilayer. Residues 357-482 (GEFAKERERV…FFIRRMVKAQ (126 aa)) are Cytoplasmic-facing. The binding to the beta subunit stretch occupies residues 379–396 (QQIERELNGYLEWIFKAE). The residue at position 411 (S411) is a Phosphoserine. 451 to 458 (ASLKSGKT) is a binding site for ATP. Residues 468-712 (EKMFRFFIRR…VFLAIAVDNL (245 aa)) form an II repeat. A helical membrane pass occupies residues 483–501 (SFYWVVLCVVALNTLCVAM). The Extracellular portion of the chain corresponds to 502–511 (VHYNQPRRLT). A helical membrane pass occupies residues 512–534 (TTLYFAEFVFLGLFLTEMSLKMY). The Cytoplasmic segment spans residues 535 to 544 (GLGPRSYFRS). S544 lines the a 1,2-diacyl-sn-glycero-3-phospho-(1D-myo-inositol-4,5-bisphosphate) pocket. A helical membrane pass occupies residues 545-566 (SFNCFDFGVIVGSVFEVVWAAI). The Extracellular segment spans residues 567–573 (KPGSSFG). Residues 574 to 586 (ISVLRALRLLRIF) traverse the membrane as a helical segment. A 1,2-diacyl-sn-glycero-3-phospho-(1D-myo-inositol-4,5-bisphosphate)-binding residues include R584 and K587. Residues 587–604 (KVTKYWSSLRNLVVSLLN) lie on the Cytoplasmic side of the membrane. A helical transmembrane segment spans residues 605 to 630 (SMKSIISLLFLLFLFIVVFALLGMQL). Residues 631–682 (FGGQFNFQDETPTTNFDTFPAAILTVFQILTGEDWNAVMYHGIESQGGVSKG) are Extracellular-facing. Residues 683–709 (MFSSFYFIVLTLFGNYTLLNVFLAIAV) form a helical membrane-spanning segment. The Cytoplasmic portion of the chain corresponds to 710–1151 (DNLANAQELT…FCHYIVTMRY (442 aa)). S745, S748, and S783 each carry phosphoserine. 4 stretches are compositionally biased toward basic and acidic residues: residues 816 to 826 (PLVVELGRDGA), 857 to 886 (KDKTPAAGDQDRAEAPKAESGEPGAREERP), 922 to 932 (GSPEEAAEREP), and 965 to 976 (GPREAESGEEPA). Disordered regions lie at residues 816–1038 (PLVV…VTVG) and 1054–1076 (QPEDADNQRNVTRMGSQPPDPNT). Residues 977–986 (RRHRARHKAQ) show a composition bias toward basic residues. The span at 990–1029 (EAVEKETTEKEATEKEAEIVEADKEKELRNHQPREPHCDL) shows a compositional bias: basic and acidic residues. S1069 is modified (phosphoserine). One copy of the III repeat lies at 1137–1419 (NLLRRFCHYI…IFVALIIITF (283 aa)). Residues 1152–1170 (FEVVILVVIALSSIALAAE) form a helical membrane-spanning segment. The Extracellular portion of the chain corresponds to 1171–1178 (DPVRTDSP). The helical transmembrane segment at 1179–1203 (RNNALKYLDYIFTGVFTFEMVIKMI) threads the bilayer. The Cytoplasmic segment spans residues 1204 to 1217 (DLGLLLHPGAYFRD). Residues 1218-1238 (LWNILDFIVVSGALVAFAFSG) traverse the membrane as a helical segment. Residues 1239-1244 (SKGKDI) lie on the Extracellular side of the membrane. Residues 1245–1265 (NTIKSLRVLRVLRPLKTIKRL) traverse the membrane as a helical segment. Residues 1266–1283 (PKLKAVFDCVVNSLKNVL) lie on the Cytoplasmic side of the membrane. Residues 1284 to 1303 (NILIVYMLFMFIFAVIAVQL) form a helical membrane-spanning segment. At 1304–1390 (FKGKFFYCTD…EQGPSPGYRM (87 aa)) the chain is on the extracellular side. A helical transmembrane segment spans residues 1391–1416 (ELSIFYVVYFVVFPFFFVNIFVALII). Residues 1417–1471 (ITFQEQGDKVMSECSLEKNERACIDFAISAKPLTRYMPQNRQSFQYKTWTFVVSP) are Cytoplasmic-facing. An IV repeat occupies 1456-1711 (NRQSFQYKTW…LFVAVIMDNF (256 aa)). The helical transmembrane segment at 1472-1490 (PFEYFIMAMIALNTVVLMM) threads the bilayer. Topologically, residues 1491-1498 (KFYDAPYE) are extracellular. The chain crosses the membrane as a helical span at residues 1499 to 1523 (YELMLKCLNIVFTSMFSMECVLKII). The Cytoplasmic portion of the chain corresponds to 1524 to 1533 (AFGVLNYFRD). A helical membrane pass occupies residues 1534 to 1555 (AWNVFDFVTVLGSITDILVTEI). The Extracellular portion of the chain corresponds to 1556-1563 (AETNNFIN). N1563 carries an N-linked (GlcNAc...) asparagine glycan. A helical membrane pass occupies residues 1564–1582 (LSFLRLFRAARLIKLLRQG). Residues 1583-1601 (YTIRILLWTFVQSFKALPY) are Cytoplasmic-facing. Residues 1602–1621 (VCLLIAMLFFIYAIIGMQVF) form a helical membrane-spanning segment. The Extracellular segment spans residues 1622 to 1683 (GNIALDDDTS…ANATECGSDF (62 aa)). N1675 is a glycosylation site (N-linked (GlcNAc...) asparagine). The chain crosses the membrane as a helical span at residues 1684-1707 (AYFYFVSFIFLCSFLMLNLFVAVI). Topologically, residues 1708-2339 (MDNFEYLTRD…YHHPDQDHWC (632 aa)) are cytoplasmic. Residues 1724–1759 (HHLDEFIRVWAEYDPAACGRISYNDMFEMLKHMSPP) enclose the EF-hand domain. Residues D1737, R1743, and D1748 each coordinate Ca(2+). Residues 1916-1931 (SSTSLSNGGAIQNQES) show a composition bias toward polar residues. 2 disordered regions span residues 1916–1968 (SSTS…VGRS) and 1981–2206 (TRRG…YKTA). Over residues 1946 to 1960 (DAPHEARPPLERGHS) the composition is skewed to basic and acidic residues. Basic residues predominate over residues 2049–2063 (SHHHHHRCHRRRDRK). S2066 is subject to Phosphoserine. The segment covering 2098–2116 (CRRERERRQERGRSQERRQ) has biased composition (basic and acidic residues). Residues 2143 to 2153 (PSLSSHPTSPT) are compositionally biased toward low complexity. Over residues 2164 to 2180 (GSGSVNGSPLLSTSGAS) the composition is skewed to polar residues. 3 positions are modified to phosphoserine: S2224, S2233, and S2256.

Belongs to the calcium channel alpha-1 subunit (TC 1.A.1.11) family. CACNA1B subfamily. Multisubunit complex consisting of alpha-1, alpha-2, beta and delta subunits in a 1:1:1:1 ratio. The channel activity is directed by the pore-forming and voltage-sensitive alpha-1 subunit. In many cases, this subunit is sufficient to generate voltage-sensitive calcium channel activity. The auxiliary subunits beta and alpha-2/delta linked by a disulfide bridge regulate the channel activity. Interacts with RIMS1. Interacts with FMR1 (via C-terminus); this interaction induces a decrease in the number of presynaptic functional CACNA1B channels at the cell surface. Phosphorylated in vitro by CaM-kinase II, PKA, PKC and CGPK. As to expression, isoform Alpha-1b-1 and isoform Alpha-1b-2 are expressed in the central nervous system, but not in skeletal muscle or aorta. Expressed in the cerebral white matter, cortex, hippocampus, basal ganglia, and cerebellum.

It is found in the membrane. The enzyme catalyses Ca(2+)(in) = Ca(2+)(out). Its activity is regulated as follows. Is specifically blocked by omega-conotoxin GVIA. Is specifically blocked by omega-conotoxin MVIIA (ziconotide). Is insensitive to dihydropyridines (DHP). Is specifically blocked by omega-conotoxin MVIIA (ziconotide). Is insensitive to dihydropyridines (DHP). In terms of biological role, voltage-sensitive calcium channels (VSCC) mediate the entry of calcium ions into excitable cells and are also involved in a variety of calcium-dependent processes, including muscle contraction, hormone or neurotransmitter release, gene expression, cell motility, cell division and cell death. This alpha-1B subunit gives rise to N-type calcium currents. N-type calcium channels belong to the 'high-voltage activated' (HVA) group. They are involved in pain signaling. Calcium channels containing alpha-1B subunit may play a role in directed migration of immature neurons. Mediates Ca(2+) release probability at hippocampal neuronal soma and synaptic terminals. Its function is as follows. Voltage-sensitive calcium channels (VSCC) mediate the entry of calcium ions into excitable cells and are also involved in a variety of calcium-dependent processes, including muscle contraction, hormone or neurotransmitter release, gene expression, cell motility, cell division and cell death. This alpha-1B subunit gives rise to N-type calcium currents. The protein is Voltage-dependent N-type calcium channel subunit alpha-1B (CACNA1B) of Homo sapiens (Human).